We begin with the raw amino-acid sequence, 316 residues long: Lys-63-specific deubiquitinase BRCC36 (316 aa).

Residue Ala-2 is modified to N-acetylalanine. Residues 12–179 (VHLESDAFLV…YTCFQSIQAQ (168 aa)) form the MPN domain. The Zn(2+) site is built by His-122, His-124, and Asp-135. A JAMM motif motif is present at residues 122 to 135 (HSHPHITVWPSHVD). Residue Ser-258 is modified to Phosphoserine.

It belongs to the peptidase M67A family. BRCC36 subfamily. In terms of assembly, component of the ARISC complex, at least composed of UIMC1/RAP80, ABRAXAS1, BRCC3/BRCC36, BABAM2 and BABAM1/NBA1. Component of the BRCA1-A complex, at least composed of BRCA1, BARD1, UIMC1/RAP80, ABRAXAS1, BRCC3/BRCC36, babam2 and BABAM1/NBA1. In the BRCA1-A complex, interacts directly with ABRAXAS1 and babam2. Component of the BRISC complex, at least composed of ABRAXAS2, BRCC3/BRCC36, BABAM2 and BABAM1/NBA1. Identified in a complex with SHMT2 and the other subunits of the BRISC complex. In the BRISC complex, interacts directly with ABRAXAS2. Identified in a complex with ABRAXAS2 and NUMA1. The BRISC complex interacts with the CSN complex. Component of the BRCA1/BRCA2 containing complex (BRCC), which also contains BRCA1, BRCA2, BARD1, BABAM2 and RAD51. BRCC is a ubiquitin E3 ligase complex that enhances cellular survival following DNA damage. Interacts with BRCA1. Binds polyubiquitin. Interacts with PWWP2B. Interacts with HDAC1; this interaction is enhanced in the presence of PWWP2B. The cofactor is Zn(2+). Heart, brain, placenta, lung, liver, skeletal muscle, kidney and pancreas. Aberrantly expressed in the vast majority of breast tumors.

It is found in the nucleus. Its subcellular location is the cytoplasm. It localises to the cytoskeleton. The protein localises to the spindle pole. Functionally, metalloprotease that specifically cleaves 'Lys-63'-linked polyubiquitin chains. Does not have activity toward 'Lys-48'-linked polyubiquitin chains. Component of the BRCA1-A complex, a complex that specifically recognizes 'Lys-63'-linked ubiquitinated histones H2A and H2AX at DNA lesions sites, leading to target the BRCA1-BARD1 heterodimer to sites of DNA damage at double-strand breaks (DSBs). In the BRCA1-A complex, it specifically removes 'Lys-63'-linked ubiquitin on histones H2A and H2AX, antagonizing the RNF8-dependent ubiquitination at double-strand breaks (DSBs). Catalytic subunit of the BRISC complex, a multiprotein complex that specifically cleaves 'Lys-63'-linked ubiquitin in various substrates. Mediates the specific 'Lys-63'-specific deubiquitination associated with the COP9 signalosome complex (CSN), via the interaction of the BRISC complex with the CSN complex. The BRISC complex is required for normal mitotic spindle assembly and microtubule attachment to kinetochores via its role in deubiquitinating NUMA1. Plays a role in interferon signaling via its role in the deubiquitination of the interferon receptor IFNAR1; deubiquitination increases IFNAR1 activity by enhancing its stability and cell surface expression. Acts as a regulator of the NLRP3 inflammasome by mediating deubiquitination of NLRP3, leading to NLRP3 inflammasome assembly. Down-regulates the response to bacterial lipopolysaccharide (LPS) via its role in IFNAR1 deubiquitination. Deubiquitinates HDAC1 and PWWP2B leading to their stabilization. The protein is Lys-63-specific deubiquitinase BRCC36 (BRCC3) of Homo sapiens (Human).